Consider the following 631-residue polypeptide: Probable potassium transport system protein Kup (631 aa).

Transmembrane regions (helical) follow at residues 17–37, 56–76, 109–129, 147–167, 174–194, 215–235, 256–276, 288–308, 346–366, 378–398, 403–423, and 428–448; these read IGLLIAAVGVVYGDIGTSPLY, ILGVLSLIFWSLIWVVSFKYM, MMMVVFGLFGAALFYGDSMIT, GLDHWIVPMALIVLVGLFLIQ, IGVLFGPVMVTWFLVLGALGV, FFIIHPGIGVAILGAVVLALT, WFILVLPALLLNYFGQGALVL, LLAPGWALLPLIGLSTMATII, IYIGAVNWALMAGVILLVIGF, VAVTGTMLCTTILVSTVMLML, PLLAVPLLICLLLVDGLFFAA, and IFQGGAFPVLAGAVLFILMTT.

This sequence belongs to the HAK/KUP transporter (TC 2.A.72) family.

The protein resides in the cell inner membrane. It carries out the reaction K(+)(in) + H(+)(in) = K(+)(out) + H(+)(out). Its function is as follows. Transport of potassium into the cell. Likely operates as a K(+):H(+) symporter. The protein is Probable potassium transport system protein Kup of Pseudomonas savastanoi pv. phaseolicola (strain 1448A / Race 6) (Pseudomonas syringae pv. phaseolicola (strain 1448A / Race 6)).